A 414-amino-acid polypeptide reads, in one-letter code: MPRASALLTSDPRHQFTCCLCLHVRTGTIIFGITQIIIQLIFISFLFLMTFNPRLFPEDNHGSLDSSQANARYYVLSALFRLVPAVSDIHESLTFPSFPEVRNVNDNKLLFGHNSESEVNFNFDISSGYKDSVPIDMSHSPSRLMSETHKRERGSREIKIRQFSPYIAVCVTTFSLAFCCFMVHGAITRQPTHLLPFFFIQVFDLIICLIHILGFMSSTSDIRLMIHTKTGPIYIKSTGLAFIILSISCMMLAFKAYCLGMVWDCYKYLMLNRRNNVLNEWYSDQWGHFSTFWSLLRAGRNRGNNLTGNLDSANESNTRAHPDPVTYDPSNDLPKYDDILKIPANAYAPPPYYCSNINGNGNLTQANAVTANTTSTNVSTFTTTTTTANTTTNVTSANKNDAEVTSTPSNVHPC.

The Cytoplasmic portion of the chain corresponds to 1–28 (MPRASALLTSDPRHQFTCCLCLHVRTGT). Residues 29 to 49 (IIFGITQIIIQLIFISFLFLM) traverse the membrane as a helical segment. The Extracellular segment spans residues 50–166 (TFNPRLFPED…EIKIRQFSPY (117 aa)). Residues 167–187 (IAVCVTTFSLAFCCFMVHGAI) form a helical membrane-spanning segment. Residues 188-194 (TRQPTHL) are Cytoplasmic-facing. Residues 195–215 (LPFFFIQVFDLIICLIHILGF) form a helical membrane-spanning segment. Residues 216–241 (MSSTSDIRLMIHTKTGPIYIKSTGLA) are Extracellular-facing. Residues 242 to 262 (FIILSISCMMLAFKAYCLGMV) traverse the membrane as a helical segment. The Cytoplasmic portion of the chain corresponds to 263-414 (WDCYKYLMLN…TSTPSNVHPC (152 aa)). A disordered region spans residues 306–328 (LTGNLDSANESNTRAHPDPVTYD).

Interacts (via N-terminal extracellular domain) with human C2a. In terms of processing, phosphorylated on tyrosine residues.

The protein resides in the cell membrane. Functionally, cell surface receptor that binds to human complement C2a protein. This results in inhibition of the classical and lectin pathways of complement activation, probably due to interference with binding of C2a to C4b and interference with cleavage by C1 or MASP2 such that C3 convertase cannot be formed. This infers resistance to complement-mediated cell lysis, allowing parasite survival and infection. This chain is Tetraspanning orphan receptor, found in Schistosoma japonicum (Blood fluke).